The sequence spans 20 residues: Protein PR-L5 (20 aa).

It belongs to the BetVI family.

The sequence is that of Protein PR-L5 from Lupinus luteus (European yellow lupine).